An 87-amino-acid polypeptide reads, in one-letter code: Guanine nucleotide-binding protein subunit gamma (87 aa).

Cysteine methyl ester is present on Cys-84. Residue Cys-84 is the site of S-geranylgeranyl cysteine attachment. Positions 85–87 are cleaved as a propeptide — removed in mature form; that stretch reads LLV.

The protein belongs to the G protein gamma family. G proteins are composed of 3 units, alpha, beta and gamma. In terms of processing, the N-terminus is blocked.

The protein resides in the cell membrane. Functionally, guanine nucleotide-binding proteins (G proteins) are involved as a modulator or transducer in various transmembrane signaling systems. This major G-protein of the squid photoreceptor is involved in visual transduction. The beta and gamma chains are required for the GTPase activity, for replacement of GDP by GTP, and for G protein-effector interaction. This is Guanine nucleotide-binding protein subunit gamma from Loligo forbesii (Veined squid).